The chain runs to 152 residues: UPF0178 protein Shewmr7_1635 (152 aa).

This sequence belongs to the UPF0178 family.

This is UPF0178 protein Shewmr7_1635 from Shewanella sp. (strain MR-7).